A 428-amino-acid polypeptide reads, in one-letter code: Serine--tRNA ligase (428 aa).

Position 235–237 (235–237) interacts with L-serine; it reads TAE. 266–268 contributes to the ATP binding site; the sequence is RSE. E289 serves as a coordination point for L-serine. 353–356 serves as a coordination point for ATP; it reads EISS. L-serine is bound at residue S389.

Belongs to the class-II aminoacyl-tRNA synthetase family. Type-1 seryl-tRNA synthetase subfamily. Homodimer. The tRNA molecule binds across the dimer.

It is found in the cytoplasm. It carries out the reaction tRNA(Ser) + L-serine + ATP = L-seryl-tRNA(Ser) + AMP + diphosphate + H(+). It catalyses the reaction tRNA(Sec) + L-serine + ATP = L-seryl-tRNA(Sec) + AMP + diphosphate + H(+). It participates in aminoacyl-tRNA biosynthesis; selenocysteinyl-tRNA(Sec) biosynthesis; L-seryl-tRNA(Sec) from L-serine and tRNA(Sec): step 1/1. In terms of biological role, catalyzes the attachment of serine to tRNA(Ser). Is also able to aminoacylate tRNA(Sec) with serine, to form the misacylated tRNA L-seryl-tRNA(Sec), which will be further converted into selenocysteinyl-tRNA(Sec). This Shewanella woodyi (strain ATCC 51908 / MS32) protein is Serine--tRNA ligase.